The sequence spans 154 residues: 6,7-dimethyl-8-ribityllumazine synthase (154 aa).

5-amino-6-(D-ribitylamino)uracil-binding positions include Phe-22, 56-58 (AFE), and 80-82 (TVI). Position 85–86 (85–86 (ST)) interacts with (2S)-2-hydroxy-3-oxobutyl phosphate. Catalysis depends on His-88, which acts as the Proton donor. Phe-113 serves as a coordination point for 5-amino-6-(D-ribitylamino)uracil. Arg-127 provides a ligand contact to (2S)-2-hydroxy-3-oxobutyl phosphate.

The protein belongs to the DMRL synthase family.

It carries out the reaction (2S)-2-hydroxy-3-oxobutyl phosphate + 5-amino-6-(D-ribitylamino)uracil = 6,7-dimethyl-8-(1-D-ribityl)lumazine + phosphate + 2 H2O + H(+). It functions in the pathway cofactor biosynthesis; riboflavin biosynthesis; riboflavin from 2-hydroxy-3-oxobutyl phosphate and 5-amino-6-(D-ribitylamino)uracil: step 1/2. Functionally, catalyzes the formation of 6,7-dimethyl-8-ribityllumazine by condensation of 5-amino-6-(D-ribitylamino)uracil with 3,4-dihydroxy-2-butanone 4-phosphate. This is the penultimate step in the biosynthesis of riboflavin. This is 6,7-dimethyl-8-ribityllumazine synthase from Lactococcus lactis subsp. lactis (strain IL1403) (Streptococcus lactis).